The following is a 240-amino-acid chain: Probable Ni/Fe-hydrogenase B-type cytochrome subunit (240 aa).

4 helical membrane-spanning segments follow: residues 31 to 51 (LWHWVTALSIVVLGVTGYFIG), 75 to 95 (FAAGYVLAIGFLGRVYWAFVG), 142 to 163 (LAMFCFFVIGAVFMSVTGFALY), and 196 to 213 (LGMWYLVVFVMIHVYLAA).

It belongs to the HupC/HyaC/HydC family.

It is found in the cell membrane. Its function is as follows. Probable b-type cytochrome. The sequence is that of Probable Ni/Fe-hydrogenase B-type cytochrome subunit (hupZ) from Azotobacter chroococcum mcd 1.